We begin with the raw amino-acid sequence, 458 residues long: Bifunctional thioredoxin reductase/thioredoxin (458 aa).

Residues 1–321 (MNTTPSAHET…LAEHAGSKAN (321 aa)) are thioredoxin reductase. FAD contacts are provided by residues 19–22 (SGPA), 41–48 (EGTSFGGA), N57, and V90. C142 and C145 are disulfide-bonded. S163, H182, R188, I245, and Y265 together coordinate NADP(+). FAD is bound by residues D285 and 292 to 295 (RQAI). R292 is a binding site for NADP(+). Residues 322 to 347 (ETTEETGDVDSTDTTDWSTAMTDAKN) are linker. A Thioredoxin domain is found at 341-455 (AMTDAKNAGV…LLRDLSDVVP (115 aa)). Cysteines 379 and 382 form a disulfide.

The protein in the N-terminal section; belongs to the class-II pyridine nucleotide-disulfide oxidoreductase family. In terms of assembly, homodimer. Requires FAD as cofactor.

The protein localises to the cytoplasm. It catalyses the reaction [thioredoxin]-dithiol + NADP(+) = [thioredoxin]-disulfide + NADPH + H(+). This chain is Bifunctional thioredoxin reductase/thioredoxin (trxB/A), found in Mycobacterium leprae (strain TN).